The sequence spans 184 residues: MATFQAHFFAAVMCVGVLGLSKLCGADSCEYPDCVFTGLPRSSGVERYILLLNIIEVPDDIQQQCDILIQRAHNCTSQRTGCSRRVEESYDRRFYDGAYVMYLLDLGVYVCGHLSQLLDLKNCFTPKLQESVQSCINAAYNIQCLLDQYDQKNNCPPNTDDYFHTLVNNWLANNPYLGTGADRD.

The signal sequence occupies residues 1 to 26; that stretch reads MATFQAHFFAAVMCVGVLGLSKLCGA. Intrachain disulfides connect Cys29–Cys34, Cys65–Cys111, Cys75–Cys82, Cys123–Cys155, and Cys135–Cys144. Asn74 carries N-linked (GlcNAc...) asparagine glycosylation.

In terms of processing, N-glycosylated. Highly expressed in atrium. Moderately expressed in the pericardium, pulmonary vein, nephridium, arteria anterior, ovotestis and connective tissue. Low expression found in intestine, lung plexus, diaphragm, subesophageal ganglion, ventricle and digestive gland. Very low expression found in columellar retractor, pedal nerves and cerebral ganglion. Not expressed in hemocytes.

The protein resides in the secreted. The polypeptide is Cysteine-rich atrial secretory protein (Achatina achatina (Giant Ghana snail)).